The sequence spans 406 residues: Succinylornithine transaminase (406 aa).

Position 252 is an N6-(pyridoxal phosphate)lysine (K252).

It belongs to the class-III pyridoxal-phosphate-dependent aminotransferase family. AstC subfamily. Pyridoxal 5'-phosphate is required as a cofactor.

The enzyme catalyses N(2)-succinyl-L-ornithine + 2-oxoglutarate = N-succinyl-L-glutamate 5-semialdehyde + L-glutamate. It functions in the pathway amino-acid degradation; L-arginine degradation via AST pathway; L-glutamate and succinate from L-arginine: step 3/5. Its function is as follows. Catalyzes the transamination of N(2)-succinylornithine and alpha-ketoglutarate into N(2)-succinylglutamate semialdehyde and glutamate. Can also act as an acetylornithine aminotransferase. The polypeptide is Succinylornithine transaminase (Shigella sonnei (strain Ss046)).